A 399-amino-acid chain; its full sequence is Insertion element IS900 uncharacterized 42 kDa protein (399 aa).

Belongs to the transposase IS1111A/IS1328/IS1533 family.

The sequence is that of Insertion element IS900 uncharacterized 42 kDa protein from Mycobacterium paratuberculosis.